Here is a 310-residue protein sequence, read N- to C-terminus: Malate dehydrogenase (310 aa).

Residues Gly-7–Gly-13 and Asp-34 contribute to the NAD(+) site. Residues Arg-81 and Arg-87 each coordinate substrate. NAD(+)-binding positions include Asn-94 and Ile-117–Asn-119. Substrate contacts are provided by Asn-119 and Arg-153. His-177 (proton acceptor) is an active-site residue. An NAD(+)-binding site is contributed by Met-227.

Belongs to the LDH/MDH superfamily. MDH type 1 family. Homodimer.

It carries out the reaction (S)-malate + NAD(+) = oxaloacetate + NADH + H(+). Its function is as follows. Catalyzes the reversible oxidation of malate to oxaloacetate. In Vibrio vulnificus (strain YJ016), this protein is Malate dehydrogenase.